The sequence spans 754 residues: 1,4-alpha-glucan branching enzyme GlgB (754 aa).

Residue aspartate 431 is the Nucleophile of the active site. Residue glutamate 484 is the Proton donor of the active site.

This sequence belongs to the glycosyl hydrolase 13 family. GlgB subfamily. As to quaternary structure, monomer.

It catalyses the reaction Transfers a segment of a (1-&gt;4)-alpha-D-glucan chain to a primary hydroxy group in a similar glucan chain.. The protein operates within glycan biosynthesis; glycogen biosynthesis. In terms of biological role, catalyzes the formation of the alpha-1,6-glucosidic linkages in glycogen by scission of a 1,4-alpha-linked oligosaccharide from growing alpha-1,4-glucan chains and the subsequent attachment of the oligosaccharide to the alpha-1,6 position. This Prochlorococcus marinus (strain MIT 9215) protein is 1,4-alpha-glucan branching enzyme GlgB.